The primary structure comprises 1644 residues: Kinesin-like protein unc-104 (1644 aa).

One can recognise a Kinesin motor domain in the interval 3 to 351 (SVKVAVRVRP…LRYADRAKQI (349 aa)). 97–104 (GQTGAGKS) is an ATP binding site. The stretch at 358–436 (NEDANAKLIR…IAELNETWEE (79 aa)) forms a coiled coil. One can recognise an FHA domain in the interval 499-565 (TRLGTSEANV…LQTGSRVILG (67 aa)). The segment covering 574–591 (HPEQAREKREKPKDKDVG) has biased composition (basic and acidic residues). Positions 574 to 598 (HPEQAREKREKPKDKDVGENPGGNA) are disordered. The stretch at 631–672 (EQFKREKLAADQEFEEQRKTYEARIDALQKQVEEQSMTMSMY) forms a coiled coil. Disordered stretches follow at residues 953-985 (EQED…LQPG) and 1419-1440 (HMVI…TLPE). Positions 969-984 (ELHESNEHEPGEHLQP) are enriched in basic and acidic residues. Residues 1428–1437 (TPVKDQQTPT) show a composition bias toward polar residues. The PH domain occupies 1542 to 1640 (VVARKGYLNV…WLYAINPLLA (99 aa)).

This sequence belongs to the TRAFAC class myosin-kinesin ATPase superfamily. Kinesin family. Unc-104 subfamily. Monomer.

It localises to the cytoplasm. It is found in the cytoskeleton. In terms of biological role, required for presynaptic maturation, has a role in axonal transport of dense-core vesicles carrying synaptic vesicle precursors, components required for the morphological transformation of axonal growth cones to mature boutons. This Aedes aegypti (Yellowfever mosquito) protein is Kinesin-like protein unc-104.